A 330-amino-acid polypeptide reads, in one-letter code: Global transcription regulator sge1 (330 aa).

Disordered stretches follow at residues 93-123 (PPGE…RNSV) and 239-306 (QYAP…HQPQ). Residues 105-114 (GKSTTQSGGI) are compositionally biased toward polar residues. A compositionally biased stretch (low complexity) spans 250 to 306 (QQPALQQQPQQQPQPQHQPQLQYQPQPHQHQPQLQYQPQQQHQPQQQYRPQPQHQPQ).

The protein belongs to the MIT1/WOR1 family.

It is found in the nucleus. Global transcriptional regulator of pathogenicity. Acts as an activator of parasitic growth. Not essential for colonization or penetration of the root surface, but required for expression of genes encoding effectors that are secreted during infection. Involved in conidiogenesis, but is not required for conidial fitness, overall (colony) morphology, vegetative growth or carbon source utilization. In Fusarium oxysporum f. sp. lycopersici (strain 4287 / CBS 123668 / FGSC 9935 / NRRL 34936) (Fusarium vascular wilt of tomato), this protein is Global transcription regulator sge1.